Reading from the N-terminus, the 1204-residue chain is Major DNA-binding protein (1204 aa).

Residues 289 to 314 (SGTTTARGARRNDVNSTSKPSPSGGF) form a disordered region. The segment at 497–510 (CSLCEKHTRPVCAH) is a zinc-finger region. 2 short sequence motifs (required for filament formation) span residues 841-842 (FW) and 1146-1148 (FNF). Positions 1177-1204 (LKRPPEDDELFDLSGIPIKHGNITMEMI) are required for nuclear localization.

It belongs to the herpesviridae major DNA-binding protein family. Homooligomers. Forms double-helical filaments necessary for the formation of replication compartments within the host nucleus. Interacts with the origin-binding protein. Interacts with the helicase primase complex; this interaction stimulates primer synthesis activity of the helicase-primase complex. Interacts with the DNA polymerase. Interacts with the alkaline exonuclease; this interaction increases its nuclease processivity.

Its subcellular location is the host nucleus. Plays several crucial roles in viral infection. Participates in the opening of the viral DNA origin to initiate replication by interacting with the origin-binding protein. May disrupt loops, hairpins and other secondary structures present on ssDNA to reduce and eliminate pausing of viral DNA polymerase at specific sites during elongation. Promotes viral DNA recombination by performing strand-transfer, characterized by the ability to transfer a DNA strand from a linear duplex to a complementary single-stranded DNA circle. Can also catalyze the renaturation of complementary single strands. Additionally, reorganizes the host cell nucleus, leading to the formation of prereplicative sites and replication compartments. This process is driven by the protein which can form double-helical filaments in the absence of DNA. The sequence is that of Major DNA-binding protein from Homo sapiens (Human).